The following is a 359-amino-acid chain: Phospho-N-acetylmuramoyl-pentapeptide-transferase (359 aa).

Helical transmembrane passes span 23 to 43, 68 to 88, 92 to 112, 126 to 146, 165 to 185, 198 to 218, 235 to 255, 262 to 282, 287 to 307, and 336 to 356; these read VAFF…IKWA, MGGI…GNLF, VLLG…DDYM, MKFF…LYIG, AFKI…VFLA, GLAT…VYVA, SGEL…FLWY, VFMG…MAIV, ILLL…ILQV, and KIIV…LLSL.

The protein belongs to the glycosyltransferase 4 family. MraY subfamily. Mg(2+) serves as cofactor.

It localises to the cell inner membrane. The catalysed reaction is UDP-N-acetyl-alpha-D-muramoyl-L-alanyl-gamma-D-glutamyl-meso-2,6-diaminopimeloyl-D-alanyl-D-alanine + di-trans,octa-cis-undecaprenyl phosphate = di-trans,octa-cis-undecaprenyl diphospho-N-acetyl-alpha-D-muramoyl-L-alanyl-D-glutamyl-meso-2,6-diaminopimeloyl-D-alanyl-D-alanine + UMP. Its pathway is cell wall biogenesis; peptidoglycan biosynthesis. Catalyzes the initial step of the lipid cycle reactions in the biosynthesis of the cell wall peptidoglycan: transfers peptidoglycan precursor phospho-MurNAc-pentapeptide from UDP-MurNAc-pentapeptide onto the lipid carrier undecaprenyl phosphate, yielding undecaprenyl-pyrophosphoryl-MurNAc-pentapeptide, known as lipid I. The chain is Phospho-N-acetylmuramoyl-pentapeptide-transferase from Helicobacter hepaticus (strain ATCC 51449 / 3B1).